A 103-amino-acid chain; its full sequence is BLOC-1-related complex subunit 7 (103 aa).

The protein belongs to the BORCS7 family.

Its subcellular location is the lysosome membrane. Its function is as follows. As part of a BORC-like complex may play a role in lysosomes movement and localization at the cell periphery. Associated with the cytosolic face of lysosomes, this complex may couple lysosomes to microtubule plus-end-directed kinesin motor. The protein is BLOC-1-related complex subunit 7 of Danio rerio (Zebrafish).